The sequence spans 276 residues: Undecaprenyl-diphosphatase (276 aa).

A run of 8 helical transmembrane segments spans residues 1 to 21 (MSWLQVIVLAVVQGLTEFLPV), 39 to 59 (AGASFTAVTQLGTEVAVLVYF), 84 to 104 (YRLGWYVIIGTIPIGVIGLLL), 115 to 135 (LWAIAIALIVFSAVIAAAEYF), 159 to 179 (LALLPGVSRSGATISAGLFLG), 190 to 210 (FLLAIPAVFASGLFSLPDAFA), 222 to 242 (QLLVATVIAFVVGFAAVAWFL), and 253 to 273 (FVGYRVVLGVVVLILLSTGVV).

Belongs to the UppP family.

The protein resides in the cell membrane. The catalysed reaction is di-trans,octa-cis-undecaprenyl diphosphate + H2O = di-trans,octa-cis-undecaprenyl phosphate + phosphate + H(+). Functionally, catalyzes the dephosphorylation of undecaprenyl diphosphate (UPP). Confers resistance to bacitracin. This is Undecaprenyl-diphosphatase from Mycobacterium sp. (strain KMS).